A 474-amino-acid polypeptide reads, in one-letter code: Glutamate--tRNA ligase (474 aa).

A 'HIGH' region motif is present at residues 9–19; that stretch reads PSPTGYLHVGG. Residues 240 to 244 carry the 'KMSKS' region motif; it reads KLSKR. K243 contacts ATP.

This sequence belongs to the class-I aminoacyl-tRNA synthetase family. Glutamate--tRNA ligase type 1 subfamily. As to quaternary structure, monomer.

It localises to the cytoplasm. It catalyses the reaction tRNA(Glu) + L-glutamate + ATP = L-glutamyl-tRNA(Glu) + AMP + diphosphate. Its function is as follows. Catalyzes the attachment of glutamate to tRNA(Glu) in a two-step reaction: glutamate is first activated by ATP to form Glu-AMP and then transferred to the acceptor end of tRNA(Glu). This chain is Glutamate--tRNA ligase, found in Vibrio vulnificus (strain CMCP6).